The sequence spans 222 residues: Cytochrome b6 (222 aa).

The helical transmembrane segment at 39–59 (IFYCLGGITLTCFLIQFATGF) threads the bilayer. Cys-42 contacts heme c. Positions 93 and 107 each coordinate heme b. 3 helical membrane passes run 97–117 (ASMM…TGGF), 123–143 (LTWV…VTGY), and 193–213 (LHTF…FLMI). The heme b site is built by His-194 and His-209.

This sequence belongs to the cytochrome b family. PetB subfamily. The 4 large subunits of the cytochrome b6-f complex are cytochrome b6, subunit IV (17 kDa polypeptide, PetD), cytochrome f and the Rieske protein, while the 4 small subunits are PetG, PetL, PetM and PetN. The complex functions as a dimer. Heme b is required as a cofactor. It depends on heme c as a cofactor.

Its subcellular location is the cellular thylakoid membrane. In terms of biological role, component of the cytochrome b6-f complex, which mediates electron transfer between photosystem II (PSII) and photosystem I (PSI), cyclic electron flow around PSI, and state transitions. The chain is Cytochrome b6 from Cyanothece sp. (strain PCC 7425 / ATCC 29141).